The primary structure comprises 38 residues: Large ribosomal subunit protein bL36 (38 aa).

The protein belongs to the bacterial ribosomal protein bL36 family.

This Porphyromonas gingivalis (strain ATCC 33277 / DSM 20709 / CIP 103683 / JCM 12257 / NCTC 11834 / 2561) protein is Large ribosomal subunit protein bL36.